Here is a 315-residue protein sequence, read N- to C-terminus: Adenine deaminase (315 aa).

Zn(2+) is bound by residues His14, His16, and His194. Glu197 (proton donor) is an active-site residue. Asp275 lines the Zn(2+) pocket. Residue Asp276 coordinates substrate.

It belongs to the metallo-dependent hydrolases superfamily. Adenosine and AMP deaminases family. Adenine deaminase type 2 subfamily. It depends on Zn(2+) as a cofactor.

The enzyme catalyses adenine + H2O + H(+) = hypoxanthine + NH4(+). Functionally, catalyzes the hydrolytic deamination of adenine to hypoxanthine. Plays an important role in the purine salvage pathway and in nitrogen catabolism. This Pseudomonas putida (strain ATCC 47054 / DSM 6125 / CFBP 8728 / NCIMB 11950 / KT2440) protein is Adenine deaminase.